Here is a 309-residue protein sequence, read N- to C-terminus: tRNA dimethylallyltransferase (309 aa).

14 to 21 (GPTASGKS) provides a ligand contact to ATP. A substrate-binding site is contributed by 16–21 (TASGKS). The segment at 39 to 42 (DSMQ) is interaction with substrate tRNA.

The protein belongs to the IPP transferase family. Monomer. Mg(2+) serves as cofactor.

It carries out the reaction adenosine(37) in tRNA + dimethylallyl diphosphate = N(6)-dimethylallyladenosine(37) in tRNA + diphosphate. Catalyzes the transfer of a dimethylallyl group onto the adenine at position 37 in tRNAs that read codons beginning with uridine, leading to the formation of N6-(dimethylallyl)adenosine (i(6)A). The chain is tRNA dimethylallyltransferase from Geobacter metallireducens (strain ATCC 53774 / DSM 7210 / GS-15).